Consider the following 219-residue polypeptide: Phosphatidylserine decarboxylase proenzyme (219 aa).

Ser188 serves as the catalytic Schiff-base intermediate with substrate; via pyruvic acid. The residue at position 188 (Ser188) is a Pyruvic acid (Ser); by autocatalysis.

It belongs to the phosphatidylserine decarboxylase family. PSD-A subfamily. In terms of assembly, heterodimer of a large membrane-associated beta subunit and a small pyruvoyl-containing alpha subunit. Requires pyruvate as cofactor. Is synthesized initially as an inactive proenzyme. Formation of the active enzyme involves a self-maturation process in which the active site pyruvoyl group is generated from an internal serine residue via an autocatalytic post-translational modification. Two non-identical subunits are generated from the proenzyme in this reaction, and the pyruvate is formed at the N-terminus of the alpha chain, which is derived from the carboxyl end of the proenzyme. The post-translation cleavage follows an unusual pathway, termed non-hydrolytic serinolysis, in which the side chain hydroxyl group of the serine supplies its oxygen atom to form the C-terminus of the beta chain, while the remainder of the serine residue undergoes an oxidative deamination to produce ammonia and the pyruvoyl prosthetic group on the alpha chain.

It localises to the cell membrane. The catalysed reaction is a 1,2-diacyl-sn-glycero-3-phospho-L-serine + H(+) = a 1,2-diacyl-sn-glycero-3-phosphoethanolamine + CO2. It functions in the pathway phospholipid metabolism; phosphatidylethanolamine biosynthesis; phosphatidylethanolamine from CDP-diacylglycerol: step 2/2. Its function is as follows. Catalyzes the formation of phosphatidylethanolamine (PtdEtn) from phosphatidylserine (PtdSer). The polypeptide is Phosphatidylserine decarboxylase proenzyme (Trichlorobacter lovleyi (strain ATCC BAA-1151 / DSM 17278 / SZ) (Geobacter lovleyi)).